The following is an 878-amino-acid chain: Longitudinals lacking protein, isoforms N/O/W/X/Y (878 aa).

In terms of domain architecture, BTB spans 32–97 (VDCTLAAEGK…MYRGEVNISQ (66 aa)). Disordered regions lie at residues 115–200 (LSDN…SSVL), 228–340 (SSGP…ASAS), and 542–583 (QIVK…QTHA). Low complexity-rich tracts occupy residues 162–175 (SGDV…SSSP), 228–251 (SSGP…LTST), 263–293 (TSST…QTTS), 329–340 (NSATGPNPASAS), and 546–569 (QQHQ…QQQQ). Residues 709 to 731 (YACNVCGKTYKIKGSLKRHKNYE) form a C2H2-type 1; degenerate zinc finger. The segment at 794–816 (FQCDFCLKWFKRRSHLNRHKKLH) adopts a C2H2-type 2 zinc-finger fold. The segment at 826 to 863 (SKQKPKTTSGQNLSHDANTDDEVATTNPAATEDESNYP) is disordered. The span at 831–841 (KTTSGQNLSHD) shows a compositional bias: polar residues.

By stage 11, isoform W, isoform X and isoform Y are expressed throughout the mesoderm, whereas isoform O is expressed in both mesoderm and ectoderm. From stage 15, expression of isoform O expands to all tissues, whereas expression of isoform W, isoform X and isoform Y becomes restricted during later stages; starting from stage 14 to 16, isoform W, isoform X and isoform Y are expressed in muscle. From stages 14 and 15, isoform W and isoform Y are expressed in the gut. For some isoforms, expression is also seen in specific types of cells in the embryo; isoform O is expressed in the ventral furrow at stage 5 and in the dorsal epidermis from stage 7. Isoform Y shows prominent expression in the gonad starting at stage 15.

The protein resides in the nucleus. In terms of biological role, putative transcription factor required for axon growth and guidance in the central and peripheral nervous systems. Repels CNS axons away from the midline by promoting the expression of the midline repellent sli and its receptor robo. The polypeptide is Longitudinals lacking protein, isoforms N/O/W/X/Y (Drosophila melanogaster (Fruit fly)).